The sequence spans 457 residues: ATP synthase subunit beta (457 aa).

ATP is bound at residue 147–154; that stretch reads GGAGVGKT.

This sequence belongs to the ATPase alpha/beta chains family. F-type ATPases have 2 components, CF(1) - the catalytic core - and CF(0) - the membrane proton channel. CF(1) has five subunits: alpha(3), beta(3), gamma(1), delta(1), epsilon(1). CF(0) has three main subunits: a(1), b(2) and c(9-12). The alpha and beta chains form an alternating ring which encloses part of the gamma chain. CF(1) is attached to CF(0) by a central stalk formed by the gamma and epsilon chains, while a peripheral stalk is formed by the delta and b chains.

Its subcellular location is the cell inner membrane. The enzyme catalyses ATP + H2O + 4 H(+)(in) = ADP + phosphate + 5 H(+)(out). In terms of biological role, produces ATP from ADP in the presence of a proton gradient across the membrane. The catalytic sites are hosted primarily by the beta subunits. This is ATP synthase subunit beta from Haemophilus influenzae (strain 86-028NP).